Reading from the N-terminus, the 418-residue chain is Serine--tRNA ligase (418 aa).

226–228 contacts L-serine; the sequence is TSE. Residues 257–259 and V273 contribute to the ATP site; that span reads RRE. E280 lines the L-serine pocket. 344–347 lines the ATP pocket; the sequence is ELTS. T379 provides a ligand contact to L-serine.

It belongs to the class-II aminoacyl-tRNA synthetase family. Type-1 seryl-tRNA synthetase subfamily. In terms of assembly, homodimer. The tRNA molecule binds across the dimer.

Its subcellular location is the cytoplasm. It carries out the reaction tRNA(Ser) + L-serine + ATP = L-seryl-tRNA(Ser) + AMP + diphosphate + H(+). The catalysed reaction is tRNA(Sec) + L-serine + ATP = L-seryl-tRNA(Sec) + AMP + diphosphate + H(+). It functions in the pathway aminoacyl-tRNA biosynthesis; selenocysteinyl-tRNA(Sec) biosynthesis; L-seryl-tRNA(Sec) from L-serine and tRNA(Sec): step 1/1. Functionally, catalyzes the attachment of serine to tRNA(Ser). Is also able to aminoacylate tRNA(Sec) with serine, to form the misacylated tRNA L-seryl-tRNA(Sec), which will be further converted into selenocysteinyl-tRNA(Sec). The sequence is that of Serine--tRNA ligase from Mycobacteroides abscessus (strain ATCC 19977 / DSM 44196 / CCUG 20993 / CIP 104536 / JCM 13569 / NCTC 13031 / TMC 1543 / L948) (Mycobacterium abscessus).